The chain runs to 326 residues: Target of rapamycin complex subunit LST8 (326 aa).

M1 bears the N-acetylmethionine mark. 5 WD repeats span residues 1–37 (MNTT…CTRT), 40–80 (HQDS…PIIS), 83–122 (GVSK…LQCQ), 126–165 (QVNA…NEQL), and 168–207 (EPEF…GDEV). The residue at position 51 (T51) is a Phosphothreonine. A Glycyl lysine isopeptide (Lys-Gly) (interchain with G-Cter in SUMO3) cross-link involves residue K86. Glycyl lysine isopeptide (Lys-Gly) (interchain with G-Cter in SUMO3) cross-links involve residues K215, K245, and K261. One copy of the WD 6 repeat lies at 218–257 (AHTRYALQCRFSPDSTLLATCSADQTCKIWRTSNFSLMTE). One copy of the WD 7 repeat lies at 268 to 309 (SSRGWMWGCAFSGDSQYIVTASSDNLARLWCVETGEIKREYG). A Glycyl lysine isopeptide (Lys-Gly) (interchain with G-Cter in SUMO3); alternate cross-link involves residue K305. Residues K305 and K313 each participate in a glycyl lysine isopeptide (Lys-Gly) (interchain with G-Cter in ubiquitin); alternate cross-link. Residue K313 forms a Glycyl lysine isopeptide (Lys-Gly) (interchain with G-Cter in SUMO1); alternate linkage.

It belongs to the WD repeat LST8 family. Part of the mechanistic target of rapamycin complex 1 (mTORC1) which contains MTOR, MLST8 and RPTOR. mTORC1 associates with AKT1S1/PRAS40, which inhibits its activity. mTORC1 binds to and is inhibited by FKBP12-rapamycin. Within mTORC1, interacts directly with MTOR and RPTOR. Component of the mechanistic target of rapamycin complex 2 (mTORC2), consisting in two heterotretramers composed of MTOR, MLST8, RICTOR and MAPKAP1/SIN1. Contrary to mTORC1, mTORC2 does not bind to and is not sensitive to FKBP12-rapamycin. mTORC1 and mTORC2 associate with DEPTOR, which regulates their activity. Interacts with RHEB. Interacts with MEAK7. Interacts with SIK3. Interacts with SLC38A7; this interaction promotes the recruitment of mTORC1 to the lysosome and its subsequent activation. Post-translationally, phosphorylation at Thr-51 by CDK1 promotes ubiquitination by the SCF(FBXW7) complex, followed by degradation. Ubiquitination by the SCF(FBXW7) and SCF(FBXW11) complexes following phosphorylation at Thr-51 by CDK1, leads to its degradation by the proteasome. Ubiquitination at Lys-305 and Lys-313 by TRAF2 via 'Lys-63'-linked polyubiquitin chains inhibits formation of the mTORC2 complex, while promoting formation of the mTORC1 complex: ubiquitination disrupts the interaction between MLST8 and MAPKAP1/SIN1 to favor mTORC1 assembly. Deubiquitination at Lys-305 and Lys-313 by OTUD7B promotes MLST8 interaction with MAPKAP1/SIN1, facilitating mTORC2 assembly. In terms of processing, sumoylation with SUMO1, SUMO2 and SUMO3 promotes assembly of both mTORC1 and mTORC2 complexes. Expressed at highest levels in the brain and testis, followed by lung, heart, kidney, skeletal muscle, spleen and liver. Also expressed in epididymal, abdominal and brown fat, small intestine and pancreas.

It is found in the lysosome membrane. Its subcellular location is the cytoplasm. Subunit of both mTORC1 and mTORC2, which regulates cell growth and survival in response to nutrient and hormonal signals. mTORC1 is activated in response to growth factors or amino acids. In response to nutrients, mTORC1 is recruited to the lysosome membrane and promotes protein, lipid and nucleotide synthesis by phosphorylating several substrates, such as ribosomal protein S6 kinase (RPS6KB1 and RPS6KB2) and EIF4EBP1 (4E-BP1). In the same time, it inhibits catabolic pathways by phosphorylating the autophagy initiation components ULK1 and ATG13, as well as transcription factor TFEB, a master regulators of lysosomal biogenesis and autophagy. The mTORC1 complex is inhibited in response to starvation and amino acid depletion. Within mTORC1, MLST8 interacts directly with MTOR and enhances its kinase activity. In nutrient-poor conditions, stabilizes the MTOR-RPTOR interaction and favors RPTOR-mediated inhibition of MTOR activity. As part of the mTORC2 complex, transduces signals from growth factors to pathways involved in proliferation, cytoskeletal organization, lipogenesis and anabolic output. mTORC2 is also activated by growth factors, but seems to be nutrient-insensitive. In response to growth factors, mTORC2 phosphorylates and activates AGC protein kinase family members, including AKT (AKT1, AKT2 and AKT3), PKC (PRKCA, PRKCB and PRKCE) and SGK1. mTORC2 functions upstream of Rho GTPases to regulate the actin cytoskeleton, probably by activating one or more Rho-type guanine nucleotide exchange factors. mTORC2 promotes the serum-induced formation of stress-fibers or F-actin. mTORC2 plays a critical role in AKT1 activation by mediating phosphorylation of different sites depending on the context, such as 'Thr-450', 'Ser-473', 'Ser-477' or 'Thr-479', facilitating the phosphorylation of the activation loop of AKT1 on 'Thr-308' by PDPK1/PDK1 which is a prerequisite for full activation. mTORC2 regulates the phosphorylation of SGK1 at 'Ser-422'. mTORC2 also modulates the phosphorylation of PRKCA on 'Ser-657'. Within mTORC2, MLST8 acts as a bridge between MAPKAP1/SIN1 and MTOR. The sequence is that of Target of rapamycin complex subunit LST8 from Rattus norvegicus (Rat).